The sequence spans 317 residues: MAALLQCISHSPMKGYVDPSPAIVSDVEVAIARMRKELVDFDPEVIFLFAPDHYNGFFLDVMPQFCVGIAATSVGDYRTTPGPINVPREIARSCAEHLISNDIDVAISYRMQVDHGMVQPLEELMGGLNAYPVVPLFVNGVAPPLISIRRARLFGAAVGEYAKKLNKRCLFIGSGGLSHNPPVPQIDTATEEFAEFLIAGRNPSPERRAARQQRTKDAAIRFAAGDSQLHPINSVWDEAFMADLVNQDWGALDAYRNSEITEQAGISTHEAKSWVAAHAAMNAATSGGYMAEVRYYKAIPEWIVGYGAMAGSAEQAT.

Catalysis depends on His115, which acts as the Proton donor. His179 serves as the catalytic Proton acceptor.

Belongs to the LigB/MhpB extradiol dioxygenase family. In terms of assembly, homotetramer. Requires Fe(2+) as cofactor.

It carries out the reaction 3-(2,3-dihydroxyphenyl)propanoate + O2 = (2Z,4E)-2-hydroxy-6-oxonona-2,4-dienedioate + H(+). The catalysed reaction is (2E)-3-(2,3-dihydroxyphenyl)prop-2-enoate + O2 = (2Z,4E,7E)-2-hydroxy-6-oxonona-2,4,7-trienedioate + H(+). It participates in aromatic compound metabolism; 3-phenylpropanoate degradation. Catalyzes the non-heme iron(II)-dependent oxidative cleavage of 2,3-dihydroxyphenylpropionic acid and 2,3-dihydroxicinnamic acid into 2-hydroxy-6-ketononadienedioate and 2-hydroxy-6-ketononatrienedioate, respectively. The sequence is that of 2,3-dihydroxyphenylpropionate/2,3-dihydroxicinnamic acid 1,2-dioxygenase 2 from Dechloromonas aromatica (strain RCB).